Reading from the N-terminus, the 95-residue chain is uncharacterized protein (95 aa).

Residues 60–89 (VKNMINRIVEELDKRIDEIKEGLNELEKSG) are a coiled coil.

This is an uncharacterized protein from Sulfolobus islandicus filamentous virus (isolate Iceland/Hveragerdi) (SIFV).